Reading from the N-terminus, the 497-residue chain is 4,4'-diapolycopene oxygenase (497 aa).

This sequence belongs to the carotenoid/retinoid oxidoreductase family. FAD is required as a cofactor.

It catalyses the reaction all-trans-4,4'-diapolycopene + 4 AH2 + 4 O2 = all-trans-4,4'-diapolycopene-4,4'-dial + 4 A + 6 H2O. It carries out the reaction all-trans-4,4'-diaponeurosporene + 2 AH2 + 2 O2 = 4,4'-diaponeurosporenal + 2 A + 3 H2O. Its pathway is carotenoid biosynthesis. In terms of biological role, involved in the biosynthesis of C30 carotenoids. Catalyzes the oxidation of the terminal methyl side groups of 4,4'-diapolycopene to yield 4,4'-diapolycopen-4,4'-dial via the aldehyde intermediate 4,4'-diapolycopen-al. Also able to catalyze the oxidation of the terminal methyl side group of 4,4'-diaponeurosporene to form 4,4'-diaponeurosporen-4-al. It has moderate to low activity on the C40 substrates neurosporene and lycopene, and has no detectable activity on zeta-carotene or beta-carotene. In Methylomonas sp, this protein is 4,4'-diapolycopene oxygenase.